The sequence spans 1820 residues: Kinesin-like protein KIF20B (1820 aa).

The Kinesin motor domain occupies 58–479; it reads YLQVCLRIRP…LKFSAIAQKV (422 aa). ATP is bound at residue 152–159; the sequence is GLTNSGKT. The residue at position 488 (serine 488) is a Phosphoserine. Coiled coils occupy residues 523–603 and 674–793; these read ENSL…KIRE and GFED…MENT. A Phosphothreonine modification is found at threonine 560. The interval 829 to 866 is disordered; sequence SERKRVNENELQQDEPPAKKGSIHVSSAITEDQKKSEE. Serine 997 bears the Phosphoserine mark. The necessary and sufficient for interaction with SHTN1 stretch occupies residues 1050-1107; sequence ENSFHSSIEAIWEECKEIVKASSKKSHQIEELEQQIEKLQAEVKGYKDENNRLKEKEH. A compositionally biased stretch (basic and acidic residues) spans 1247–1264; the sequence is EEEEETNRQETEKLKEEL. Positions 1247-1275 are disordered; sequence EEEEETNRQETEKLKEELSASSARTQNLK. A compositionally biased stretch (polar residues) spans 1265 to 1274; it reads SASSARTQNL. The tract at residues 1560–1820 is interaction with PIN1; the sequence is IETQIMDIKP…KRRLRTKTAK (261 aa). Phosphoserine is present on serine 1588. Residue threonine 1644 is modified to Phosphothreonine; by CDK1. A phosphoserine mark is found at serine 1658, serine 1715, and serine 1740. Polar residues predominate over residues 1760 to 1772; the sequence is LSNVEASKENVSQ. The tract at residues 1760 to 1781 is disordered; sequence LSNVEASKENVSQPKRAKRKLY.

The protein belongs to the TRAFAC class myosin-kinesin ATPase superfamily. Kinesin family. Oligomerizes (via kinesin motor domain). Associates with microtubules. Interacts (via C-terminal globular tail region) with PIN1 (via WW domain). Interacts with PRC1. Interacts with SHTN1 (via N-terminus); the interaction is direct and promotes the association of SHTN1 to microtubules in primary neurons. Post-translationally, phosphorylated during mitosis by CDK1. Brain, ovary, kidney and testis (at protein level). Overexpressed in bladder cancer cells (at protein level). Expressed in testis. Overexpressed in bladder cancer cells.

It localises to the nucleus. It is found in the cytoplasm. The protein localises to the cytoskeleton. The protein resides in the microtubule organizing center. Its subcellular location is the centrosome. It localises to the nucleolus. It is found in the nucleoplasm. The protein localises to the spindle. The protein resides in the spindle pole. Its subcellular location is the midbody. It localises to the cell projection. It is found in the axon. The protein localises to the growth cone. In terms of biological role, plus-end-directed motor enzyme that is required for completion of cytokinesis. Required for proper midbody organization and abscission in polarized cortical stem cells. Plays a role in the regulation of neuronal polarization by mediating the transport of specific cargos. Participates in the mobilization of SHTN1 and in the accumulation of PIP3 in the growth cone of primary hippocampal neurons in a tubulin and actin-dependent manner. In the developing telencephalon, cooperates with SHTN1 to promote both the transition from the multipolar to the bipolar stage and the radial migration of cortical neurons from the ventricular zone toward the superficial layer of the neocortex. Involved in cerebral cortex growth. Acts as an oncogene for promoting bladder cancer cells proliferation, apoptosis inhibition and carcinogenic progression. In Homo sapiens (Human), this protein is Kinesin-like protein KIF20B.